The primary structure comprises 346 residues: Tyrosine--tRNA ligase (346 aa).

Positions 47–56 match the 'HIGH' region motif; it reads PSGRIHIAQA. Residues 230–234 carry the 'KMSKS' region motif; the sequence is KMSKS. Lys233 provides a ligand contact to ATP.

The protein belongs to the class-I aminoacyl-tRNA synthetase family. Homodimer.

It carries out the reaction tRNA(Tyr) + L-tyrosine + ATP = L-tyrosyl-tRNA(Tyr) + AMP + diphosphate + H(+). In terms of biological role, catalyzes the attachment of tyrosine to tRNA(Tyr) in a two-step reaction: tyrosine is first activated by ATP to form Tyr-AMP and then transferred to the acceptor end of tRNA(Tyr). This chain is Tyrosine--tRNA ligase (YARS), found in Acanthamoeba polyphaga (Amoeba).